The sequence spans 313 residues: Acetyl-coenzyme A carboxylase carboxyl transferase subunit alpha (313 aa).

The CoA carboxyltransferase C-terminal domain maps to 42–292 (KSDKLLRDTY…GAAIGEELDK (251 aa)).

It belongs to the AccA family. As to quaternary structure, acetyl-CoA carboxylase is a heterohexamer composed of biotin carboxyl carrier protein (AccB), biotin carboxylase (AccC) and two subunits each of ACCase subunit alpha (AccA) and ACCase subunit beta (AccD).

Its subcellular location is the cytoplasm. It catalyses the reaction N(6)-carboxybiotinyl-L-lysyl-[protein] + acetyl-CoA = N(6)-biotinyl-L-lysyl-[protein] + malonyl-CoA. The protein operates within lipid metabolism; malonyl-CoA biosynthesis; malonyl-CoA from acetyl-CoA: step 1/1. Its function is as follows. Component of the acetyl coenzyme A carboxylase (ACC) complex. First, biotin carboxylase catalyzes the carboxylation of biotin on its carrier protein (BCCP) and then the CO(2) group is transferred by the carboxyltransferase to acetyl-CoA to form malonyl-CoA. The chain is Acetyl-coenzyme A carboxylase carboxyl transferase subunit alpha from Rhizorhabdus wittichii (strain DSM 6014 / CCUG 31198 / JCM 15750 / NBRC 105917 / EY 4224 / RW1) (Sphingomonas wittichii).